Consider the following 215-residue polypeptide: 16S rRNA (adenine(1408)-N(1))-methyltransferase (215 aa).

S-adenosyl-L-methionine contacts are provided by residues Gly32, Asp55, 87 to 88 (AE), 102 to 107 (LMPWGS), and 191 to 193 (TSW).

This sequence belongs to the methyltransferase superfamily. Kanamycin-apramycin resistance family.

The enzyme catalyses adenosine(1408) in 16S rRNA + S-adenosyl-L-methionine = N(1)-methyladenosine(1408) in 16S rRNA + S-adenosyl-L-homocysteine + H(+). Its function is as follows. Specifically methylates the N(1) position of adenine 1408 in 16S rRNA. Confers resistance to various aminoglycosides, including kanamycin, neomycin and apramycin. In Streptoalloteichus tenebrarius (strain ATCC 17920 / DSM 40477 / JCM 4838 / CBS 697.72 / NBRC 16177 / NCIMB 11028 / NRRL B-12390 / A12253. 1 / ISP 5477) (Streptomyces tenebrarius), this protein is 16S rRNA (adenine(1408)-N(1))-methyltransferase (kamB).